The chain runs to 421 residues: Serine hydroxymethyltransferase (421 aa).

(6S)-5,6,7,8-tetrahydrofolate contacts are provided by residues Leu121 and Gly125–Leu127. N6-(pyridoxal phosphate)lysine is present on Lys229.

It belongs to the SHMT family. As to quaternary structure, homodimer. Requires pyridoxal 5'-phosphate as cofactor.

The protein resides in the cytoplasm. The enzyme catalyses (6R)-5,10-methylene-5,6,7,8-tetrahydrofolate + glycine + H2O = (6S)-5,6,7,8-tetrahydrofolate + L-serine. The protein operates within one-carbon metabolism; tetrahydrofolate interconversion. It participates in amino-acid biosynthesis; glycine biosynthesis; glycine from L-serine: step 1/1. Its function is as follows. Catalyzes the reversible interconversion of serine and glycine with tetrahydrofolate (THF) serving as the one-carbon carrier. This reaction serves as the major source of one-carbon groups required for the biosynthesis of purines, thymidylate, methionine, and other important biomolecules. Also exhibits THF-independent aldolase activity toward beta-hydroxyamino acids, producing glycine and aldehydes, via a retro-aldol mechanism. This is Serine hydroxymethyltransferase from Haemophilus influenzae (strain ATCC 51907 / DSM 11121 / KW20 / Rd).